The primary structure comprises 77 residues: uncharacterized protein (77 aa).

This sequence to E.coli YdfK.

This is an uncharacterized protein from Escherichia coli (strain K12).